A 466-amino-acid polypeptide reads, in one-letter code: 3-isopropylmalate dehydratase large subunit (466 aa).

Positions 347, 408, and 411 each coordinate [4Fe-4S] cluster.

Belongs to the aconitase/IPM isomerase family. LeuC type 1 subfamily. Heterodimer of LeuC and LeuD. Requires [4Fe-4S] cluster as cofactor.

The catalysed reaction is (2R,3S)-3-isopropylmalate = (2S)-2-isopropylmalate. It functions in the pathway amino-acid biosynthesis; L-leucine biosynthesis; L-leucine from 3-methyl-2-oxobutanoate: step 2/4. Functionally, catalyzes the isomerization between 2-isopropylmalate and 3-isopropylmalate, via the formation of 2-isopropylmaleate. This Herminiimonas arsenicoxydans protein is 3-isopropylmalate dehydratase large subunit.